A 421-amino-acid polypeptide reads, in one-letter code: Tryptophan synthase beta chain (421 aa).

At lysine 112 the chain carries N6-(pyridoxal phosphate)lysine.

The protein belongs to the TrpB family. Tetramer of two alpha and two beta chains. It depends on pyridoxal 5'-phosphate as a cofactor.

It catalyses the reaction (1S,2R)-1-C-(indol-3-yl)glycerol 3-phosphate + L-serine = D-glyceraldehyde 3-phosphate + L-tryptophan + H2O. It functions in the pathway amino-acid biosynthesis; L-tryptophan biosynthesis; L-tryptophan from chorismate: step 5/5. In terms of biological role, the beta subunit is responsible for the synthesis of L-tryptophan from indole and L-serine. The sequence is that of Tryptophan synthase beta chain (trpB) from Mycobacterium bovis (strain ATCC BAA-935 / AF2122/97).